A 174-amino-acid polypeptide reads, in one-letter code: Elongation factor Tu, mitochondrial (174 aa).

D62–H66 provides a ligand contact to GTP. K78 is subject to N6-succinyllysine. Phosphothreonine is present on T103. A Phosphoserine modification is found at S121. N6-acetyllysine is present on K161.

Belongs to the GTP-binding elongation factor family. EF-Tu/EF-1A subfamily.

Its subcellular location is the mitochondrion. It catalyses the reaction GTP + H2O = GDP + phosphate + H(+). GTP hydrolase that promotes the GTP-dependent binding of aminoacyl-tRNA to the A-site of ribosomes during protein biosynthesis. In Mesocricetus auratus (Golden hamster), this protein is Elongation factor Tu, mitochondrial.